The chain runs to 145 residues: D-aminoacyl-tRNA deacylase (145 aa).

The Gly-cisPro motif, important for rejection of L-amino acids motif lies at 137–138 (GP).

This sequence belongs to the DTD family. As to quaternary structure, homodimer.

It is found in the cytoplasm. The catalysed reaction is glycyl-tRNA(Ala) + H2O = tRNA(Ala) + glycine + H(+). The enzyme catalyses a D-aminoacyl-tRNA + H2O = a tRNA + a D-alpha-amino acid + H(+). An aminoacyl-tRNA editing enzyme that deacylates mischarged D-aminoacyl-tRNAs. Also deacylates mischarged glycyl-tRNA(Ala), protecting cells against glycine mischarging by AlaRS. Acts via tRNA-based rather than protein-based catalysis; rejects L-amino acids rather than detecting D-amino acids in the active site. By recycling D-aminoacyl-tRNA to D-amino acids and free tRNA molecules, this enzyme counteracts the toxicity associated with the formation of D-aminoacyl-tRNA entities in vivo and helps enforce protein L-homochirality. This chain is D-aminoacyl-tRNA deacylase, found in Shewanella denitrificans (strain OS217 / ATCC BAA-1090 / DSM 15013).